Reading from the N-terminus, the 370-residue chain is Small ribosomal subunit biogenesis GTPase RsgA 1 (370 aa).

The region spanning 97–255 (QTQLDRPPIA…LADTPGFNQP (159 aa)) is the CP-type G domain. GTP is bound by residues 146-149 (NKSD) and 197-205 (GPSGVGKSS). The Zn(2+) site is built by C280, C285, H287, and C293. The segment at 325–370 (PESTLKLKTKGKGQSQYEPKLESKKYRRTSRRTQVQGLQDLYQEEE) is disordered.

It belongs to the TRAFAC class YlqF/YawG GTPase family. RsgA subfamily. In terms of assembly, monomer. Associates with 30S ribosomal subunit, binds 16S rRNA. It depends on Zn(2+) as a cofactor.

Its subcellular location is the cytoplasm. Functionally, one of several proteins that assist in the late maturation steps of the functional core of the 30S ribosomal subunit. Helps release RbfA from mature subunits. May play a role in the assembly of ribosomal proteins into the subunit. Circularly permuted GTPase that catalyzes slow GTP hydrolysis, GTPase activity is stimulated by the 30S ribosomal subunit. The polypeptide is Small ribosomal subunit biogenesis GTPase RsgA 1 (Nostoc sp. (strain PCC 7120 / SAG 25.82 / UTEX 2576)).